Here is a 149-residue protein sequence, read N- to C-terminus: UPF0178 protein SERP0336 (149 aa).

This sequence belongs to the UPF0178 family.

In Staphylococcus epidermidis (strain ATCC 35984 / DSM 28319 / BCRC 17069 / CCUG 31568 / BM 3577 / RP62A), this protein is UPF0178 protein SERP0336.